A 49-amino-acid chain; its full sequence is Large ribosomal subunit protein bL33 (49 aa).

The protein belongs to the bacterial ribosomal protein bL33 family.

This Lacticaseibacillus casei (strain BL23) (Lactobacillus casei) protein is Large ribosomal subunit protein bL33.